Consider the following 208-residue polypeptide: GTP cyclohydrolase 1 (208 aa).

Residues C89, H92, and C163 each contribute to the Zn(2+) site.

It belongs to the GTP cyclohydrolase I family. As to quaternary structure, homomer.

It carries out the reaction GTP + H2O = 7,8-dihydroneopterin 3'-triphosphate + formate + H(+). The protein operates within cofactor biosynthesis; 7,8-dihydroneopterin triphosphate biosynthesis; 7,8-dihydroneopterin triphosphate from GTP: step 1/1. The polypeptide is GTP cyclohydrolase 1 (Saccharolobus islandicus (strain Y.N.15.51 / Yellowstone #2) (Sulfolobus islandicus)).